The sequence spans 27 residues: CD59 glycoprotein (27 aa).

Cystine bridges form between Cys-3–Cys-25 and Cys-6–Cys-12. An N-linked (GlcNAc...) asparagine glycan is attached at Asn-17.

Interacts with T-cell surface antigen CD2. N- and O-glycosylated. In terms of tissue distribution, expressed in erythrocytes and lymphocytes. Not detected in platelets.

The protein localises to the cell membrane. It is found in the secreted. Potent inhibitor of the complement membrane attack complex (MAC) action, which protects self-cells from damage during complement activation. Acts by binding to the beta-haipins of C8 (C8A and C8B) components of the assembling MAC, forming an intermolecular beta-sheet that prevents incorporation of the multiple copies of C9 required for complete formation of the osmolytic pore. This Ovis aries (Sheep) protein is CD59 glycoprotein.